Here is a 1472-residue protein sequence, read N- to C-terminus: Adhesion G protein-coupled receptor L1 (1472 aa).

An N-terminal signal peptide occupies residues 1–24 (MARLAAVLWSLCVTAILVTSATQG). Topologically, residues 25-857 (LSRAGLPFGL…EIYQGRINEL (833 aa)) are extracellular. The SUEL-type lectin domain occupies 40-129 (ACEGYPIELR…KYLEVQYDCV (90 aa)). Disulfide bonds link Cys-41–Cys-71, Cys-50–Cys-128, Cys-83–Cys-115, Cys-96–Cys-102, and Cys-140–Cys-322. Position 42 (Glu-42) interacts with alpha-L-rhamnose. Asn-98 carries an N-linked (GlcNAc...) asparagine glycan. Residue 117–120 (GTYK) participates in alpha-L-rhamnose binding. Residues 139–398 (VCPGTLQKVL…VVRYSLEFGP (260 aa)) enclose the Olfactomedin-like domain. The interval 400 to 468 (DPSAGPATSP…APAPSTRRPP (69 aa)) is disordered. Residues 405-441 (PATSPPLSTTTTARPTPLTSTASPAATTPLRRAPLTT) show a composition bias toward low complexity. The span at 453–468 (DLPPATAPAPSTRRPP) shows a compositional bias: pro residues. Disulfide bonds link Cys-480–Cys-515 and Cys-503–Cys-532. Residues Asn-531, Asn-640, Asn-741, Asn-800, Asn-805, and Asn-826 are each glycosylated (N-linked (GlcNAc...) asparagine). The region spanning 669–850 (PARFLAAKQN…AVLMAHREIY (182 aa)) is the GAIN-B domain. Disulfide bonds link Cys-801–Cys-832 and Cys-820–Cys-834. A GPS region spans residues 801–850 (CSFWNYSERSMLGYWSTQGCRLVESNKTHTTCACSHLTNFAVLMAHREIY). Residues 858–878 (LLSVITWVGIVISLVCLAICI) form a helical membrane-spanning segment. Residues 879 to 892 (STFCFLRGLQTDRN) are Cytoplasmic-facing. A helical membrane pass occupies residues 893 to 913 (TIHKNLCINLFLAELLFLVGI). Over 914-919 (DKTQYE) the chain is Extracellular. Residues 920-940 (IACPIFAGLLHYFFLAAFSWL) traverse the membrane as a helical segment. The Cytoplasmic segment spans residues 941–963 (CLEGVHLYLLLVEVFESEYSRTK). Residues 964-984 (YYYLGGYCFPALVVGIAAAID) form a helical membrane-spanning segment. The Extracellular portion of the chain corresponds to 985 to 1001 (YRSYGTEKACWLRVDNY). Residues 1002 to 1022 (FIWSFIGPVSFVIVVNLVFLM) form a helical membrane-spanning segment. The Cytoplasmic portion of the chain corresponds to 1023-1049 (VTLHKMVRSSSVLKPDSSRLDNIKSWA). A helical transmembrane segment spans residues 1050-1070 (LGAIALLFLLGLTWAFGLLFI). Residues 1071–1074 (NKES) lie on the Extracellular side of the membrane. The chain crosses the membrane as a helical span at residues 1075–1095 (VVMAYLFTTFNAFQGVFIFVF). The Cytoplasmic segment spans residues 1096 to 1472 (HCALQKKVHK…DGQMQLVTSL (377 aa)). Arg-1193 carries the post-translational modification Omega-N-methylarginine. Ser-1219 carries the phosphoserine modification. Disordered regions lie at residues 1247 to 1271 (FNNSYSLRSGDFPPGDGAPEPPRGR), 1291 to 1325 (NLRGGSSGAKGPPPPEPPVPPVPGGSGEEEAGGPG), 1358 to 1427 (ESES…SRPP), and 1449 to 1472 (YLAAPGLEGPGPDGDGQMQLVTSL). 2 stretches are compositionally biased toward pro residues: residues 1301–1313 (GPPPPEPPVPPVP) and 1406–1418 (ALPPPPPAPPGPP). Residue Ser-1471 is modified to Phosphoserine.

The protein belongs to the G-protein coupled receptor 2 family. Adhesion G-protein coupled receptor (ADGR) subfamily. As to quaternary structure, forms a heterodimer, consisting of a large extracellular region (p120) non-covalently linked to a seven-transmembrane moiety (p85). Interacts with syntaxin and with proteins of the SHANK family via the PDZ domain. Interacts (via extracellular domain) with FLRT1, FLRT2 and FLRT3 (via extracellular domain). Autoproteolytically cleaved into 2 subunits, an extracellular subunit and a seven-transmembrane subunit. This proteolytic processing takes place early in the biosynthetic pathway, either in the endoplasmic reticulum or in the early compartment of the Golgi apparatus. Brain-specific expression but low levels are also detected in kidney, lung and spleen.

Its subcellular location is the cell membrane. It localises to the cell projection. The protein localises to the axon. It is found in the growth cone. The protein resides in the synapse. Its subcellular location is the presynaptic cell membrane. It localises to the synaptosome. Its function is as follows. Calcium-independent receptor of high affinity for alpha-latrotoxin, an excitatory neurotoxin present in black widow spider venom which triggers massive exocytosis from neurons and neuroendocrine cells. Receptor for TENM2 that mediates heterophilic synaptic cell-cell contact and postsynaptic specialization. Receptor probably implicated in the regulation of exocytosis. The polypeptide is Adhesion G protein-coupled receptor L1 (Bos taurus (Bovine)).